Reading from the N-terminus, the 278-residue chain is 4-hydroxy-tetrahydrodipicolinate reductase (278 aa).

NAD(+)-binding positions include 13–18 (GAAGKM) and 111–113 (GTT). Histidine 167 functions as the Proton donor/acceptor in the catalytic mechanism. Histidine 168 contributes to the (S)-2,3,4,5-tetrahydrodipicolinate binding site. Lysine 171 (proton donor) is an active-site residue. 177-178 (GT) contacts (S)-2,3,4,5-tetrahydrodipicolinate.

It belongs to the DapB family.

The protein resides in the cytoplasm. It carries out the reaction (S)-2,3,4,5-tetrahydrodipicolinate + NAD(+) + H2O = (2S,4S)-4-hydroxy-2,3,4,5-tetrahydrodipicolinate + NADH + H(+). It catalyses the reaction (S)-2,3,4,5-tetrahydrodipicolinate + NADP(+) + H2O = (2S,4S)-4-hydroxy-2,3,4,5-tetrahydrodipicolinate + NADPH + H(+). The protein operates within amino-acid biosynthesis; L-lysine biosynthesis via DAP pathway; (S)-tetrahydrodipicolinate from L-aspartate: step 4/4. Functionally, catalyzes the conversion of 4-hydroxy-tetrahydrodipicolinate (HTPA) to tetrahydrodipicolinate. The chain is 4-hydroxy-tetrahydrodipicolinate reductase from Nostoc sp. (strain PCC 7120 / SAG 25.82 / UTEX 2576).